Here is a 162-residue protein sequence, read N- to C-terminus: NRR repressor homolog 3 (162 aa).

A disordered region spans residues 1–80 (MDPTMPTPHT…GHEEEARDED (80 aa)). Positions 7–24 (TPHTISGTSPFPRNSSTA) are enriched in polar residues. Over residues 37–46 (PRHRRSRKRD) the composition is skewed to basic residues. A compositionally biased stretch (basic and acidic residues) spans 69–80 (GHGHEEEARDED).

It belongs to the NPR1-interactor family. In terms of assembly, interacts with NPR1/NH1. Interacts with NPR3/NH3.

It is found in the nucleus. In terms of biological role, binds to and represses NPR1/NH1-mediated transcriptional activation of LG2 in vitro. This is NRR repressor homolog 3 from Oryza sativa subsp. japonica (Rice).